The following is a 1411-amino-acid chain: Tectonin beta-propeller repeat-containing protein 2 (1411 aa).

WD repeat units follow at residues Ile23–Gln66, Met67–Asn114, Lys115–Gly161, Leu162–Val203, Arg204–Val265, Lys266–Ile309, and Tyr310–Lys343. Disordered regions lie at residues Gln379 to Pro439, Val463 to Thr542, Arg579 to Ser637, and Tyr758 to Ser779. Positions Ser400–Ser420 are enriched in low complexity. 4 stretches are compositionally biased toward polar residues: residues Gly475–Cys489, Ser496–Thr542, Pro608–Ser621, and Pro763–Ser779. TECPR repeat units lie at residues Asn945–Ile976, Gln994–Ser1027, Asp1179–Asp1209, Gln1226–Glu1259, Gln1279–Pro1310, and Arg1322–Pro1353. The disordered stretch occupies residues His1388–Ile1411.

The protein belongs to the WD repeat KIAA0329 family. Interacts with the ATG8 family members GABARAP, GABARAPL1, GABARAPL2, MAP1LC3B and MAP1LC3C. As to expression, detected in skin fibroblast (at protein level).

In terms of biological role, probably plays a role as positive regulator of autophagy. The sequence is that of Tectonin beta-propeller repeat-containing protein 2 (TECPR2) from Homo sapiens (Human).